Here is a 346-residue protein sequence, read N- to C-terminus: Short-wave-sensitive opsin 1 (346 aa).

At 1–31 (MSGEDDFYLFQNISSVGPWDGPQYHLAPVWA) the chain is on the extracellular side. N12 carries an N-linked (GlcNAc...) asparagine glycan. Residues 32-56 (FRLQAAFMGFVFFVGTPLNAIVLVA) traverse the membrane as a helical segment. Residues 57-68 (TLHYKKLRQPLN) lie on the Cytoplasmic side of the membrane. A helical transmembrane segment spans residues 69–94 (YILVNVSLGGFLFCIFSVFTVFIASC). Residues 95 to 108 (HGYFLFGRHVCALE) lie on the Extracellular side of the membrane. A disulfide bridge connects residues C105 and C182. A helical membrane pass occupies residues 109-128 (AFLGSVAGLVTGWSLAFLAF). Residues 129–147 (ERYVVICKPFGSIRFNSKH) lie on the Cytoplasmic side of the membrane. The chain crosses the membrane as a helical span at residues 148 to 171 (ALMVVLATWIIGIGVSIPPFFGWS). Residues 172-197 (RFIPEGLQCSCGPDWYTVGTKYRSEY) are Extracellular-facing. Residues 198 to 225 (YTWFLFIFCFIIPLSLICFSYSQLLRTL) form a helical membrane-spanning segment. Residues 226 to 247 (RAVAAQQQESATTQKAEREVSH) lie on the Cytoplasmic side of the membrane. The chain crosses the membrane as a helical span at residues 248–271 (MVVVMVGSFCLCYVPYAALAMYMV). The Extracellular segment spans residues 272–279 (NNRNHGLD). The chain crosses the membrane as a helical span at residues 280–304 (LRLVTIPAFFSKSSCVYNPIIYCFM). K291 is modified (N6-(retinylidene)lysine). The Cytoplasmic segment spans residues 305 to 346 (NKQFRACILEMVCRKPMADESDVSGSQKTEVSTVSSSKVGPH). The segment at 324–346 (ESDVSGSQKTEVSTVSSSKVGPH) is disordered. A compositionally biased stretch (low complexity) spans 330 to 346 (SQKTEVSTVSSSKVGPH).

It belongs to the G-protein coupled receptor 1 family. Opsin subfamily. Post-translationally, phosphorylated on some or all of the serine and threonine residues present in the C-terminal region. In terms of tissue distribution, expressed in the inner and outer segments of cone photoreceptor cells in the retina (at protein level).

It localises to the cell membrane. The protein localises to the photoreceptor inner segment. The protein resides in the cell projection. It is found in the cilium. Its subcellular location is the photoreceptor outer segment. It localises to the cytoplasm. The protein localises to the perinuclear region. Its function is as follows. Visual pigments are the light-absorbing molecules that mediate vision. They consist of an apoprotein, opsin, covalently linked to cis-retinal. Required for the maintenance of cone outer segment organization in the ventral retina, but not essential for the maintenance of functioning cone photoreceptors. Involved in ensuring correct abundance and localization of retinal membrane proteins. May increase spectral sensitivity in dim light. The polypeptide is Short-wave-sensitive opsin 1 (Opn1sw) (Mus musculus (Mouse)).